A 125-amino-acid chain; its full sequence is Fluoride-specific ion channel FluC (125 aa).

A run of 4 helical transmembrane segments spans residues 3 to 23 (FILIAIGGAFGALFRYFVSKV), 33 to 53 (IPLGTVIVNVLGAFLLSFVLF), 65 to 85 (FVLFFGTGFLGAFTTFSTFAY), and 99 to 119 (LVYFFANLFFGFFAAFFGMVL). Residues Gly75 and Thr78 each coordinate Na(+).

Belongs to the fluoride channel Fluc/FEX (TC 1.A.43) family.

The protein localises to the cell inner membrane. The enzyme catalyses fluoride(in) = fluoride(out). Its activity is regulated as follows. Na(+) is not transported, but it plays an essential structural role and its presence is essential for fluoride channel function. In terms of biological role, fluoride-specific ion channel. Important for reducing fluoride concentration in the cell, thus reducing its toxicity. This is Fluoride-specific ion channel FluC from Thermosipho melanesiensis (strain DSM 12029 / CIP 104789 / BI429).